A 445-amino-acid chain; its full sequence is Chromosomal replication initiator protein DnaA (445 aa).

Residues 1-71 (MEEVWLQAQS…SVQSLTDSQT (71 aa)) are domain I, interacts with DnaA modulators. A domain II region spans residues 71–108 (TKIELLIAKPKTEKPKQPAASEVTAAEPEACSGPDHST). The segment at 83-106 (EKPKQPAASEVTAAEPEACSGPDH) is disordered. The interval 109–325 (NLNPKYTFDT…GMLIRLGAVS (217 aa)) is domain III, AAA+ region. 4 residues coordinate ATP: Gly-153, Gly-155, Lys-156, and Thr-157. The segment at 326–445 (SLTGKNITLD…VDTLRKGLLS (120 aa)) is domain IV, binds dsDNA.

The protein belongs to the DnaA family. As to quaternary structure, oligomerizes as a right-handed, spiral filament on DNA at oriC.

It is found in the cytoplasm. Its function is as follows. Plays an essential role in the initiation and regulation of chromosomal replication. ATP-DnaA binds to the origin of replication (oriC) to initiate formation of the DNA replication initiation complex once per cell cycle. Binds the DnaA box (a 9 base pair repeat at the origin) and separates the double-stranded (ds)DNA. Forms a right-handed helical filament on oriC DNA; dsDNA binds to the exterior of the filament while single-stranded (ss)DNA is stabiized in the filament's interior. The ATP-DnaA-oriC complex binds and stabilizes one strand of the AT-rich DNA unwinding element (DUE), permitting loading of DNA polymerase. After initiation quickly degrades to an ADP-DnaA complex that is not apt for DNA replication. Binds acidic phospholipids. The sequence is that of Chromosomal replication initiator protein DnaA from Geobacter sulfurreducens (strain ATCC 51573 / DSM 12127 / PCA).